The chain runs to 247 residues: GTP cyclohydrolase 1 type 2 homolog (247 aa).

Residues His-63, His-64, Asp-101, His-215, and Glu-219 each contribute to the a divalent metal cation site.

Belongs to the GTP cyclohydrolase I type 2/NIF3 family. As to quaternary structure, homohexamer.

The protein is GTP cyclohydrolase 1 type 2 homolog of Buchnera aphidicola subsp. Baizongia pistaciae (strain Bp).